Consider the following 298-residue polypeptide: uncharacterized protein (298 aa).

9 helical membrane-spanning segments follow: residues 10–30 (VIYTAVSFIMWGLFPLYWKLL), 36–56 (LDILAHRIIWSFVFMCIVLFF), 76–96 (ILSLFLASILISINWFVYIWA), 101–121 (FLLEASLGYYINPLVSVLLGI), 142–162 (GVIISAFQYGSIPYVALLLAF), 179–199 (AIGLTLETFMIMPIALGYLLF), 212–232 (GTWLLLFLAGVFTALPLLLFA), 243–263 (VGILQYIAPTITLLIGLFVYH), and 271–291 (AFTFSCIWAALLLFTFSQVKW). 2 consecutive EamA domains span residues 17–148 (FIMW…ISAF) and 162–286 (FSFG…LFTF).

It belongs to the EamA transporter family.

Its subcellular location is the cell membrane. This is an uncharacterized protein from Bacillus subtilis (strain 168).